The sequence spans 451 residues: tRNA modification GTPase MnmE (451 aa).

The (6S)-5-formyl-5,6,7,8-tetrahydrofolate site is built by R28, E85, and K124. The 158-residue stretch at 220 to 377 (GMNVVLVGQP…LRSELLRVAG (158 aa)) folds into the TrmE-type G domain. N230 is a binding site for K(+). Residues 230–235 (NVGKSS), 249–255 (TDIAGTT), and 274–277 (DTAG) contribute to the GTP site. S234 is a binding site for Mg(2+). Positions 249, 251, and 254 each coordinate K(+). T255 contacts Mg(2+). A (6S)-5-formyl-5,6,7,8-tetrahydrofolate-binding site is contributed by K451.

It belongs to the TRAFAC class TrmE-Era-EngA-EngB-Septin-like GTPase superfamily. TrmE GTPase family. As to quaternary structure, homodimer. Heterotetramer of two MnmE and two MnmG subunits. K(+) serves as cofactor.

The protein resides in the cytoplasm. Its function is as follows. Exhibits a very high intrinsic GTPase hydrolysis rate. Involved in the addition of a carboxymethylaminomethyl (cmnm) group at the wobble position (U34) of certain tRNAs, forming tRNA-cmnm(5)s(2)U34. This is tRNA modification GTPase MnmE from Aromatoleum aromaticum (strain DSM 19018 / LMG 30748 / EbN1) (Azoarcus sp. (strain EbN1)).